The following is a 451-amino-acid chain: Phosphoglucosamine mutase (451 aa).

Serine 102 acts as the Phosphoserine intermediate in catalysis. 4 residues coordinate Mg(2+): serine 102, aspartate 243, aspartate 245, and aspartate 247. At serine 102 the chain carries Phosphoserine.

Belongs to the phosphohexose mutase family. Requires Mg(2+) as cofactor. Post-translationally, activated by phosphorylation.

The enzyme catalyses alpha-D-glucosamine 1-phosphate = D-glucosamine 6-phosphate. In terms of biological role, catalyzes the conversion of glucosamine-6-phosphate to glucosamine-1-phosphate. This Salinispora tropica (strain ATCC BAA-916 / DSM 44818 / JCM 13857 / NBRC 105044 / CNB-440) protein is Phosphoglucosamine mutase.